The following is a 567-amino-acid chain: Potassium-transporting ATPase potassium-binding subunit (567 aa).

The next 11 membrane-spanning stretches (helical) occupy residues 5–25 (GWIQILVFCGIIILLVKPLGG), 64–84 (TTYAASLLLFNLAGFLLLYML), 136–156 (GLTVQNFVSAATGVAIAIALI), 179–199 (LYVLLPLCIILTLAFVSLGVP), 254–274 (ISNMIQMVAIFAIGASLTNVF), 285–305 (WAIFAAMGILFVAGVAICYWA), 332–352 (IAMSALFAVVTTAASCGAVIA), 359–376 (ALGGMIPMINMMLGEIII), 421–441 (MLAVLCLPLSILGFTAIASVI), 486–506 (ITIGLAMLMGRFLVILPAMAI), and 529–549 (LFVGLLIGVILVVGGLIFFPA).

This sequence belongs to the KdpA family. As to quaternary structure, the system is composed of three essential subunits: KdpA, KdpB and KdpC.

The protein resides in the cell inner membrane. Part of the high-affinity ATP-driven potassium transport (or Kdp) system, which catalyzes the hydrolysis of ATP coupled with the electrogenic transport of potassium into the cytoplasm. This subunit binds the periplasmic potassium ions and delivers the ions to the membrane domain of KdpB through an intramembrane tunnel. The polypeptide is Potassium-transporting ATPase potassium-binding subunit (Brucella anthropi (strain ATCC 49188 / DSM 6882 / CCUG 24695 / JCM 21032 / LMG 3331 / NBRC 15819 / NCTC 12168 / Alc 37) (Ochrobactrum anthropi)).